The chain runs to 420 residues: Glucose-1-phosphate adenylyltransferase (420 aa).

Residues Y107, G172, E187–K188, and S205 contribute to the alpha-D-glucose 1-phosphate site.

Belongs to the bacterial/plant glucose-1-phosphate adenylyltransferase family. In terms of assembly, homotetramer.

The enzyme catalyses alpha-D-glucose 1-phosphate + ATP + H(+) = ADP-alpha-D-glucose + diphosphate. It participates in glycan biosynthesis; glycogen biosynthesis. Functionally, involved in the biosynthesis of ADP-glucose, a building block required for the elongation reactions to produce glycogen. Catalyzes the reaction between ATP and alpha-D-glucose 1-phosphate (G1P) to produce pyrophosphate and ADP-Glc. This is Glucose-1-phosphate adenylyltransferase from Rhodopseudomonas palustris (strain BisB18).